The sequence spans 99 residues: Small ribosomal subunit protein cS23 (99 aa).

It belongs to the chloroplast-specific ribosomal protein cS23 family. In terms of assembly, part of the 30S ribosomal subunit.

Its subcellular location is the plastid. It is found in the chloroplast. Its function is as follows. Probably a ribosomal protein or a ribosome-associated protein. This chain is Small ribosomal subunit protein cS23, found in Gracilaria tenuistipitata var. liui (Red alga).